The sequence spans 443 residues: ATP-dependent protease ATPase subunit HslU (443 aa).

ATP is bound by residues Ile20, 62–67 (GVGKTE), Asp255, Glu321, and Arg393.

This sequence belongs to the ClpX chaperone family. HslU subfamily. A double ring-shaped homohexamer of HslV is capped on each side by a ring-shaped HslU homohexamer. The assembly of the HslU/HslV complex is dependent on binding of ATP.

Its subcellular location is the cytoplasm. In terms of biological role, ATPase subunit of a proteasome-like degradation complex; this subunit has chaperone activity. The binding of ATP and its subsequent hydrolysis by HslU are essential for unfolding of protein substrates subsequently hydrolyzed by HslV. HslU recognizes the N-terminal part of its protein substrates and unfolds these before they are guided to HslV for hydrolysis. In Helicobacter pylori (strain G27), this protein is ATP-dependent protease ATPase subunit HslU.